Reading from the N-terminus, the 1292-residue chain is Sorbin and SH3 domain-containing protein 1 (1292 aa).

Disordered regions lie at residues 1-29 (MSSE…ATAD), 73-158 (LRAS…AQPE), 214-275 (HLQR…SSPL), and 318-381 (REQQ…MDEV). Positions 74 to 89 (RASSSYRETPSSSPAS) are enriched in low complexity. Threonine 82 carries the post-translational modification Phosphothreonine. Residues serine 86 and serine 89 each carry the phosphoserine modification. A compositionally biased stretch (basic and acidic residues) spans 93-102 (TRQHESKPGL). Glutamate 105, leucine 114, valine 137, serine 146, serine 242, and serine 259 each carry phosphoserine. Polar residues predominate over residues 114 to 128 (LSSSADANGNAQPSS). A compositionally biased stretch (pro residues) spans 240 to 252 (SFSPPPPLVPPAP). Residues 266–275 (AVSSTDSSPL) show a composition bias toward polar residues. Serine 341 carries the post-translational modification Phosphoserine. The residue at position 344 (threonine 344) is a Phosphothreonine. A phosphoserine mark is found at glutamate 346 and serine 350. A compositionally biased stretch (basic and acidic residues) spans 354–365 (AIEKRAKDDSRR). The SoHo domain occupies 366-469 (VVKSTQDLSD…YSPRYSFSED (104 aa)). 3 positions are modified to phosphoserine: serine 369, serine 374, and asparagine 387. The interval 405-534 (LNRDTPEENP…TRKYRAEPKS (130 aa)) is disordered. The segment covering 437–450 (YTPTYQFPASTPSP) has biased composition (polar residues). A phosphoserine mark is found at serine 452, serine 465, aspartate 469, serine 472, arginine 478, and serine 481. Basic and acidic residues predominate over residues 510–534 (SSERNDWEPPDKKVDTRKYRAEPKS). Phosphotyrosine; by ABL1 is present on tyrosine 536. Serine 556, asparagine 603, serine 609, and serine 640 each carry phosphoserine. The interval 628–650 (APSANVPQSSAISPTPEISSETP) is disordered. Tyrosine 654 is modified (phosphotyrosine; by ABL1). A phosphoserine mark is found at serine 665 and lysine 700. The interval 692 to 716 (PLQGLSGLKRPSSSASTKDSESPRH) is disordered. Residue threonine 708 is modified to Phosphothreonine. A phosphoserine mark is found at serine 713, isoleucine 730, aspartate 735, and isoleucine 765. The 60-residue stretch at 793–852 (SEMRPARAKFDFKAQTLKELPLQKGDIVYIYKQIDQNWYEGEHHGRVGIFPRTYIELLPP) folds into the SH3 1 domain. Residue threonine 862 is modified to Phosphothreonine. Positions 867-928 (LEYGEAIAKF…PITYVDVIKR (62 aa)) constitute an SH3 2 domain. Residue valine 923 is modified to Phosphoserine. Tyrosine 937 is modified (phosphotyrosine). Residues 944 to 954 (SSPSRSATASP) are compositionally biased toward low complexity. Disordered regions lie at residues 944–976 (SSPS…SRRA), 1041–1064 (SDRP…TYSL), 1106–1150 (QLSD…KKSC), and 1162–1230 (TEQR…SQTS). 2 positions are modified to phosphoserine: serine 945 and serine 953. Over residues 955 to 971 (QFSSHSKLITPAPSSLP) the composition is skewed to polar residues. Polar residues predominate over residues 1106–1117 (QLSDAFSSQSKR). Residues 1119-1136 (PWREESGQYERKAERGAG) show a composition bias toward basic and acidic residues. Positions 1162-1172 (TEQRLSDLNTP) are enriched in polar residues. Over residues 1192-1203 (QTERHRGGEQAG) the composition is skewed to basic and acidic residues. The span at 1211–1230 (GSQQPQAQQRRVTPDRSQTS) shows a compositional bias: polar residues. Glutamine 1213 is subject to Phosphoserine. An SH3 3 domain is found at 1231–1292 (QDLFSYQALY…PGNYVKPLYL (62 aa)). Position 1240 is a phosphotyrosine; by ABL1 (tyrosine 1240).

In terms of assembly, interacts (via third SH3 domain) with the Ten-1 ICD form of TENM1; the interaction induces the translocation of SORBS1 to the nucleus. Interacts with INSM1. Interacts with the long isoform of AFDN and with VCL. AFDN and VCL bind to SORBS1 in a competitive manner and do not form a ternary complex. Interacts with ABL1, CBL, CBLB and INPPL1/SHIP2 through the third SH3 domain. Interaction with ABL1 occurs only after insulin stimulation while this has no effect on the interaction with INPPL1. Interacts with the insulin receptor but dissociates from it following insulin stimulation. Also interacts with SCA7, PTK2/FAK1 and flotillin. Interacts (via SH3 domain 2) with PXN. Post-translationally, O-glycosylated. In terms of tissue distribution, detected in skeletal muscle (at protein level). Widely expressed with highest levels in heart and skeletal muscle.

The protein resides in the cell junction. Its subcellular location is the adherens junction. It localises to the cell membrane. The protein localises to the cytoplasm. It is found in the cytoskeleton. The protein resides in the focal adhesion. Its subcellular location is the nucleus. It localises to the nucleus matrix. Functionally, plays a role in tyrosine phosphorylation of CBL by linking CBL to the insulin receptor. Required for insulin-stimulated glucose transport. Involved in formation of actin stress fibers and focal adhesions. The chain is Sorbin and SH3 domain-containing protein 1 from Homo sapiens (Human).